The chain runs to 89 residues: Small ribosomal subunit protein bS16 (89 aa).

It belongs to the bacterial ribosomal protein bS16 family.

The protein is Small ribosomal subunit protein bS16 of Gloeobacter violaceus (strain ATCC 29082 / PCC 7421).